The following is a 431-amino-acid chain: Beta-lactamase hydrolase-like protein (431 aa).

Zn(2+) is bound by residues histidine 212, histidine 214, and histidine 286. Aspartate 309 is a substrate binding site.

Belongs to the metallo-beta-lactamase superfamily. Zn(2+) is required as a cofactor.

Its function is as follows. Could play a role in cell adherence or biofilm development. This Agrobacterium fabrum (strain C58 / ATCC 33970) (Agrobacterium tumefaciens (strain C58)) protein is Beta-lactamase hydrolase-like protein.